The sequence spans 254 residues: Ubiquinone biosynthesis O-methyltransferase (254 aa).

S-adenosyl-L-methionine is bound by residues Arg-47, Gly-78, Asp-99, and Met-141.

It belongs to the methyltransferase superfamily. UbiG/COQ3 family.

The enzyme catalyses a 3-demethylubiquinol + S-adenosyl-L-methionine = a ubiquinol + S-adenosyl-L-homocysteine + H(+). It carries out the reaction a 3-(all-trans-polyprenyl)benzene-1,2-diol + S-adenosyl-L-methionine = a 2-methoxy-6-(all-trans-polyprenyl)phenol + S-adenosyl-L-homocysteine + H(+). Its pathway is cofactor biosynthesis; ubiquinone biosynthesis. Its function is as follows. O-methyltransferase that catalyzes the 2 O-methylation steps in the ubiquinone biosynthetic pathway. In Rhodopseudomonas palustris (strain BisB18), this protein is Ubiquinone biosynthesis O-methyltransferase.